A 351-amino-acid chain; its full sequence is Protein IQ-DOMAIN 27 (351 aa).

The disordered stretch occupies residues 15–37 (KKSKDRSHVSGGDSVKGGDHSGD). The calmodulin-binding stretch occupies residues 98–114 (EERWAAVKIQKVFRGSL). 2 IQ domains span residues 99–127 (ERWA…GIVK) and 128–150 (LQAL…SIQT). The short motif at 191–198 (DRRTKIVE) is the Nuclear localization signal element. Residues 299-310 (SFKAKVRSHSAP) show a composition bias toward basic residues. A disordered region spans residues 299–351 (SFKAKVRSHSAPRQRSERQRLSLDEVMASKSSVSGVSMSHQHPPRHSCSCDPL). Basic and acidic residues predominate over residues 312–321 (QRSERQRLSL). Over residues 324–337 (VMASKSSVSGVSMS) the composition is skewed to low complexity.

Belongs to the IQD family. In terms of assembly, binds to multiple calmodulin (CaM) in the presence of Ca(2+) and CaM-like proteins.

The protein localises to the nucleus. It is found in the nucleus envelope. It localises to the cytoplasm. Its subcellular location is the cytoskeleton. In terms of biological role, may be involved in cooperative interactions with calmodulins or calmodulin-like proteins. Recruits calmodulin proteins to microtubules, thus being a potential scaffold in cellular signaling and trafficking. May associate with nucleic acids and regulate gene expression at the transcriptional or post-transcriptional level. In Arabidopsis thaliana (Mouse-ear cress), this protein is Protein IQ-DOMAIN 27.